The sequence spans 507 residues: ATP synthase subunit alpha, chloroplastic (507 aa).

Residue 170–177 (GDRQTGKT) participates in ATP binding.

The protein belongs to the ATPase alpha/beta chains family. In terms of assembly, F-type ATPases have 2 components, CF(1) - the catalytic core - and CF(0) - the membrane proton channel. CF(1) has five subunits: alpha(3), beta(3), gamma(1), delta(1), epsilon(1). CF(0) has four main subunits: a, b, b' and c.

It is found in the plastid. The protein resides in the chloroplast thylakoid membrane. The catalysed reaction is ATP + H2O + 4 H(+)(in) = ADP + phosphate + 5 H(+)(out). Produces ATP from ADP in the presence of a proton gradient across the membrane. The alpha chain is a regulatory subunit. The chain is ATP synthase subunit alpha, chloroplastic from Dioscorea elephantipes (Elephant's foot yam).